Consider the following 145-residue polypeptide: Bacilliredoxin SAR1441 (145 aa).

The protein belongs to the bacilliredoxin family.

In Staphylococcus aureus (strain MRSA252), this protein is Bacilliredoxin SAR1441.